A 1762-amino-acid chain; its full sequence is Kinase D-interacting substrate of 220 kDa (1762 aa).

Residues 1–508 are Cytoplasmic-facing; the sequence is MSVLISQSVI…WLIVFLTLLL (508 aa). 11 ANK repeats span residues 45 to 74, 78 to 107, 111 to 140, 145 to 174, 178 to 207, 211 to 240, 244 to 273, 277 to 306, 310 to 339, 343 to 372, and 376 to 405; these read AAEQ…NWTA, ASKE…GWTA, ACYK…SVYP, AGRG…TTPL, ARKG…MTAL, VKGG…NTAL, SKEG…DTVL, VRGG…KTAL, VEKG…ETPL, TKMR…DTPL, and IRGR…KAGE. In terms of domain architecture, KAP NTPase spans 440–953; the sequence is YDLYSSALAD…NIVSVTGRLL (514 aa). The chain crosses the membrane as a helical span at residues 509 to 529; sequence CGGLGLVFAFTVDTNLAIAIS. Residues 530–533 lie on the Extracellular side of the membrane; it reads LSFL. A helical transmembrane segment spans residues 534–554; the sequence is ALIYIFFIVIYFGGRREGESW. The Cytoplasmic portion of the chain corresponds to 555–668; the sequence is NWAWALSTRL…SFVIFLFIVG (114 aa). The chain crosses the membrane as a helical span at residues 669–689; sequence CIIAGITLLAIFRVDPKHLTV. Topologically, residues 690 to 696 are extracellular; the sequence is NAILISI. Residues 697–717 traverse the membrane as a helical segment; that stretch reads ASVVGLAFVLNCRTWWQVLDS. Residues 718–1680 are Cytoplasmic-facing; it reads LLNSQRKRLH…TPSTVTLNNN (963 aa). Phosphoserine is present on residues serine 882 and serine 885. Threonine 914 is subject to Phosphothreonine. Serine 918 carries the phosphoserine; by PKD modification. The segment at 1089 to 1092 is mediates interaction with CRKL; it reads PRPP. Serine 1163, serine 1288, serine 1344, serine 1351, serine 1353, serine 1354, and serine 1357 each carry phosphoserine. Disordered stretches follow at residues 1279 to 1305, 1336 to 1358, 1390 to 1440, and 1452 to 1556; these read DPRF…HTEL, RHSN…LNSQ, EGGT…DGRK, and YSSS…EPIR. A compositionally biased stretch (polar residues) spans 1338 to 1350; that stretch reads SNLSWQSQTRRTP. Residues 1395-1422 show a composition bias toward low complexity; the sequence is SSTISGRSSPHSTYYIGQSSSGGSIHST. Residues 1423-1440 show a composition bias toward basic and acidic residues; sequence LEQERGKEGELKQEDGRK. Residues 1452–1462 are compositionally biased toward polar residues; it reads YSSSGVSTNEA. 4 positions are modified to phosphoserine: serine 1513, serine 1518, serine 1547, and serine 1566. Residues 1514–1524 are compositionally biased toward acidic residues; it reads DEDESGTEESD. The segment covering 1529–1553 has biased composition (basic and acidic residues); it reads LKDDKDKKAEGKAERVCKSPEHSAE. Residues 1571–1628 form a disordered region; that stretch reads DKKDSSDSGVRSNESSPNHSLHNEAADDSQLEKANLIELEDEGHSGKRGMPHSLSGLQ. Over residues 1579-1590 the composition is skewed to polar residues; it reads GVRSNESSPNHS. Serine 1615 and serine 1625 each carry phosphoserine. Threonine 1671 is subject to Phosphothreonine. Residue serine 1673 is modified to Phosphoserine. Position 1676 is a phosphothreonine (threonine 1676). Residues 1704-1762 form a disordered region; sequence ILRPGPSPNPTAVQNENLKSMAHKRSQRSSYTRLSKDASELHAASSESTGFGEERESIL. Positions 1757–1762 match the PDZ-binding motif; that stretch reads ERESIL.

As to quaternary structure, found in a complex, at least composed of KIDINS220, MAGI2, NTRK1 and RAPGEF2; the complex is mainly formed at late endosomes in a nerve growth factor (NGF)-dependent manner. Interacts with RAPGEF2; the interaction is strengthened after NGF stimulation. Isoform 2 interacts (via C-terminal domain) with MAGI2 isoform 1 (via PDZ domain). Interacts with NTRK1, NTRK2, NTRK3, ERKL and NGFR. Can form a ternary complex with NGFR and NTRK1 and this complex is affected by the expression levels of KIDINS220/ARMS. An increase in KIDINS220/ARMS expression leads to a decreased association of NGFR and NTRK1. Interacts (via PDZ-binding motif) with SNTA1 and SNTB2 (via PDZ domains). Interacts with EPHA4 and PRKD1. Tyrosine phosphorylated by NTRK1, NTRK2, EPHB2 and EPHA4. Phosphorylation at Ser-918 is induced by phorbol ester treatment. Phosphorylation by NTRK2 is induced by brain-derived neurotrophic factor (BDNF) and neurotrophin-4/5. Phosphorylation by NTRK1 is induced by nerve growth factor (NGF). In terms of tissue distribution, expressed in developing nervous system and in highly plastic areas of the adult brain. Also expressed in neuroendocrine cells, where it concentrates at the tip of neurites. Expressed in developing muscle and is concentrated at the neuromuscular junction (NMS). SNTA1 can regulate its localization in the NMS.

Its subcellular location is the membrane. It is found in the late endosome. Functionally, promotes a prolonged MAP-kinase signaling by neurotrophins through activation of a Rap1-dependent mechanism. Provides a docking site for the CRKL-C3G complex, resulting in Rap1-dependent sustained ERK activation. May play an important role in regulating postsynaptic signal transduction through the syntrophin-mediated localization of receptor tyrosine kinases such as EPHA4. In cooperation with SNTA1 can enhance EPHA4-induced JAK/STAT activation. Plays a role in nerve growth factor (NGF)-induced recruitment of RAPGEF2 to late endosomes and neurite outgrowth. May play a role in neurotrophin- and ephrin-mediated neuronal outgrowth and in axon guidance during neural development and in neuronal regeneration. The sequence is that of Kinase D-interacting substrate of 220 kDa (Kidins220) from Rattus norvegicus (Rat).